Reading from the N-terminus, the 333-residue chain is Lipoyl synthase (333 aa).

7 residues coordinate [4Fe-4S] cluster: cysteine 55, cysteine 60, cysteine 66, cysteine 81, cysteine 85, cysteine 88, and serine 292. In terms of domain architecture, Radical SAM core spans 67 to 281 (WEDREATFLI…SAEAERLGFA (215 aa)).

This sequence belongs to the radical SAM superfamily. Lipoyl synthase family. Requires [4Fe-4S] cluster as cofactor.

Its subcellular location is the cytoplasm. It carries out the reaction [[Fe-S] cluster scaffold protein carrying a second [4Fe-4S](2+) cluster] + N(6)-octanoyl-L-lysyl-[protein] + 2 oxidized [2Fe-2S]-[ferredoxin] + 2 S-adenosyl-L-methionine + 4 H(+) = [[Fe-S] cluster scaffold protein] + N(6)-[(R)-dihydrolipoyl]-L-lysyl-[protein] + 4 Fe(3+) + 2 hydrogen sulfide + 2 5'-deoxyadenosine + 2 L-methionine + 2 reduced [2Fe-2S]-[ferredoxin]. The protein operates within protein modification; protein lipoylation via endogenous pathway; protein N(6)-(lipoyl)lysine from octanoyl-[acyl-carrier-protein]: step 2/2. Functionally, catalyzes the radical-mediated insertion of two sulfur atoms into the C-6 and C-8 positions of the octanoyl moiety bound to the lipoyl domains of lipoate-dependent enzymes, thereby converting the octanoylated domains into lipoylated derivatives. This is Lipoyl synthase from Kineococcus radiotolerans (strain ATCC BAA-149 / DSM 14245 / SRS30216).